The sequence spans 260 residues: Transmembrane protein 70, mitochondrial (260 aa).

A mitochondrion-targeting transit peptide spans 1–81; it reads MLFLALGSPW…PVYWEGYVRF (81 aa). Residues 82 to 102 are Mitochondrial matrix-facing; it reads LNTPSDKSEDGRLIYTGNMAR. A helical membrane pass occupies residues 103-123; the sequence is AVFGVKCFSYSTSLIGLTFLP. Residues 124–141 are Mitochondrial intermembrane-facing; sequence YIFTQNNAISESVPLPIQ. Residues 142–162 form a helical membrane-spanning segment; it reads IIFYGIMGSFTVITPVLLHFI. Residues 163 to 260 are Mitochondrial matrix-facing; it reads TKGYVIRLYH…SEEKRHKDDK (98 aa).

It belongs to the TMEM70 family. In terms of assembly, homooligomer. Interacts (homooligomer form) with ATP5MC1; this interaction facilitates the oligomer formation of subunit c/ATP5MC1 (c-ring) and the c-ring membrane insertion and also protects ATP5MC1 against intramitochondrial proteolysis. Interacts with the core subunits TMEM126B, NDUFAF1, ECSIT and ACAD9 of the MCIA complex. Interacts with ATP5MC3, TMEM242 and TIMMDC1. In terms of tissue distribution, lower expressed in the heart than in the liver (at protein level).

The protein resides in the mitochondrion inner membrane. In terms of biological role, scaffold protein that participates in the c-ring assembly of mitochondrial ATP synthase (F(1)F(0) ATP synthase or complex V) by facilitating the membrane insertion and oligomer formation of the subunit c/ATP5MC1 through its interaction. Therefore, participates in the early stage of mitochondrial ATP synthase biogenesis and also protects subunit c/ATP5MC1 against intramitochondrial proteolysis. In addition, binds the mitochondrial proton-transporting ATP synthase complexes I and may play a role in the stability of its membrane-bound subassemblies. This chain is Transmembrane protein 70, mitochondrial, found in Homo sapiens (Human).